Consider the following 740-residue polypeptide: NAD(P)H-quinone oxidoreductase subunit 5, chloroplastic (740 aa).

Transmembrane regions (helical) follow at residues 9–29, 40–60, 89–109, 125–145, 147–167, 185–205, 219–239, 258–278, 286–306, 327–347, 354–374, 396–416, 425–445, 543–563, 602–622, and 717–737; these read WIIP…LFLF, WAFQ…YLSI, IDPL…MVLI, FAYM…SNLI, IYIF…FWFT, GDFG…SFEF, NEVD…GAVA, TPIS…FLVA, VIPY…LLGA, LGYM…FHLI, ALLF…VGYS, ITFL…CFWS, WLYS…TAFY, LFPI…GIPF, VLSV…YKPI, and SYLF…YLLF.

This sequence belongs to the complex I subunit 5 family. NDH is composed of at least 16 different subunits, 5 of which are encoded in the nucleus.

It is found in the plastid. Its subcellular location is the chloroplast thylakoid membrane. The catalysed reaction is a plastoquinone + NADH + (n+1) H(+)(in) = a plastoquinol + NAD(+) + n H(+)(out). It carries out the reaction a plastoquinone + NADPH + (n+1) H(+)(in) = a plastoquinol + NADP(+) + n H(+)(out). Its function is as follows. NDH shuttles electrons from NAD(P)H:plastoquinone, via FMN and iron-sulfur (Fe-S) centers, to quinones in the photosynthetic chain and possibly in a chloroplast respiratory chain. The immediate electron acceptor for the enzyme in this species is believed to be plastoquinone. Couples the redox reaction to proton translocation, and thus conserves the redox energy in a proton gradient. The polypeptide is NAD(P)H-quinone oxidoreductase subunit 5, chloroplastic (ndhF) (Nicotiana sylvestris (Wood tobacco)).